A 67-amino-acid polypeptide reads, in one-letter code: Large ribosomal subunit protein bL32 (67 aa).

The tract at residues 1–44 (MAVQQNRKSPSKRDMRRSHDALGFSTLSTDSKSGERHRRHHVTK) is disordered. The segment covering 11–20 (SKRDMRRSHD) has biased composition (basic and acidic residues).

This sequence belongs to the bacterial ribosomal protein bL32 family.

This is Large ribosomal subunit protein bL32 from Dichelobacter nodosus (strain VCS1703A).